A 166-amino-acid polypeptide reads, in one-letter code: Large ribosomal subunit protein uL10 (166 aa).

This sequence belongs to the universal ribosomal protein uL10 family. In terms of assembly, part of the ribosomal stalk of the 50S ribosomal subunit. The N-terminus interacts with L11 and the large rRNA to form the base of the stalk. The C-terminus forms an elongated spine to which L12 dimers bind in a sequential fashion forming a multimeric L10(L12)X complex.

Forms part of the ribosomal stalk, playing a central role in the interaction of the ribosome with GTP-bound translation factors. The protein is Large ribosomal subunit protein uL10 of Listeria innocua serovar 6a (strain ATCC BAA-680 / CLIP 11262).